A 93-amino-acid chain; its full sequence is DNA-directed RNA polymerase subunit omega (93 aa).

It belongs to the RNA polymerase subunit omega family. The RNAP catalytic core consists of 2 alpha, 1 beta, 1 beta' and 1 omega subunit. When a sigma factor is associated with the core the holoenzyme is formed, which can initiate transcription.

It catalyses the reaction RNA(n) + a ribonucleoside 5'-triphosphate = RNA(n+1) + diphosphate. In terms of biological role, promotes RNA polymerase assembly. Latches the N- and C-terminal regions of the beta' subunit thereby facilitating its interaction with the beta and alpha subunits. The chain is DNA-directed RNA polymerase subunit omega from Glaesserella parasuis serovar 5 (strain SH0165) (Haemophilus parasuis).